The following is a 334-amino-acid chain: Protein-methionine-sulfoxide reductase catalytic subunit MsrP (334 aa).

A signal peptide (tat-type signal) is located at residues 1–44 (MKAVNPLTENDVTPESLFNARRRTVLKMLGMSAAALSLPGAARA). Mo-molybdopterin-binding positions include N88, 91 to 92 (YE), C146, T181, N233, R238, and 249 to 251 (GIK).

This sequence belongs to the MsrP family. In terms of assembly, heterodimer of a catalytic subunit (MsrP) and a heme-binding subunit (MsrQ). Mo-molybdopterin serves as cofactor. In terms of processing, predicted to be exported by the Tat system. The position of the signal peptide cleavage has not been experimentally proven.

It localises to the periplasm. The enzyme catalyses L-methionyl-[protein] + a quinone + H2O = L-methionyl-(S)-S-oxide-[protein] + a quinol. It catalyses the reaction L-methionyl-[protein] + a quinone + H2O = L-methionyl-(R)-S-oxide-[protein] + a quinol. Functionally, part of the MsrPQ system that repairs oxidized periplasmic proteins containing methionine sulfoxide residues (Met-O), using respiratory chain electrons. Thus protects these proteins from oxidative-stress damage caused by reactive species of oxygen and chlorine generated by the host defense mechanisms. MsrPQ is essential for the maintenance of envelope integrity under bleach stress, rescuing a wide series of structurally unrelated periplasmic proteins from methionine oxidation. The catalytic subunit MsrP is non-stereospecific, being able to reduce both (R-) and (S-) diastereoisomers of methionine sulfoxide. This chain is Protein-methionine-sulfoxide reductase catalytic subunit MsrP, found in Erwinia tasmaniensis (strain DSM 17950 / CFBP 7177 / CIP 109463 / NCPPB 4357 / Et1/99).